The chain runs to 469 residues: ATP synthase subunit beta (469 aa).

Position 156-163 (156-163 (GGAGVGKT)) interacts with ATP.

Belongs to the ATPase alpha/beta chains family. As to quaternary structure, F-type ATPases have 2 components, CF(1) - the catalytic core - and CF(0) - the membrane proton channel. CF(1) has five subunits: alpha(3), beta(3), gamma(1), delta(1), epsilon(1). CF(0) has three main subunits: a(1), b(2) and c(9-12). The alpha and beta chains form an alternating ring which encloses part of the gamma chain. CF(1) is attached to CF(0) by a central stalk formed by the gamma and epsilon chains, while a peripheral stalk is formed by the delta and b chains.

It is found in the cell membrane. The catalysed reaction is ATP + H2O + 4 H(+)(in) = ADP + phosphate + 5 H(+)(out). Its function is as follows. Produces ATP from ADP in the presence of a proton gradient across the membrane. The catalytic sites are hosted primarily by the beta subunits. This chain is ATP synthase subunit beta, found in Lactococcus lactis subsp. cremoris (strain MG1363).